The sequence spans 782 residues: Probable cyclic di-GMP phosphodiesterase PdeI (782 aa).

2 consecutive transmembrane segments (helical) span residues 12–32 (LIIL…IINY) and 286–306 (LFYL…LMTT). Residues 527–781 (NIWIARNIRH…AWDKSGKLVK (255 aa)) enclose the EAL domain.

The protein resides in the cell membrane. The catalysed reaction is 3',3'-c-di-GMP + H2O = 5'-phosphoguanylyl(3'-&gt;5')guanosine + H(+). Phosphodiesterase (PDE) that catalyzes the hydrolysis of cyclic-di-GMP (c-di-GMP) to 5'-pGpG. Overexpression reduces biofilm formation. Cyclic-di-GMP is a second messenger which controls cell surface-associated traits in bacteria. This chain is Probable cyclic di-GMP phosphodiesterase PdeI, found in Escherichia coli (strain K12).